We begin with the raw amino-acid sequence, 70 residues long: Protein SlyX homolog (70 aa).

It belongs to the SlyX family.

The sequence is that of Protein SlyX homolog from Shewanella sp. (strain MR-4).